A 130-amino-acid polypeptide reads, in one-letter code: Iron-sulfur cluster assembly 1 homolog, mitochondrial (130 aa).

The N-terminal 24 residues, 1-24 (MATRVVATATVRAVKGRKLIPTRA), are a transit peptide targeting the mitochondrion. Residues cysteine 58, cysteine 122, and cysteine 124 each coordinate Fe cation.

Belongs to the HesB/IscA family. As to quaternary structure, interacts with cry. As to expression, detected in head.

Its subcellular location is the mitochondrion. Involved in the assembly of mitochondrial iron-sulfur proteins. Probably involved in the binding of an intermediate of Fe/S cluster assembly. Required for maintenance of circadian rhythms under constant darkness. The polypeptide is Iron-sulfur cluster assembly 1 homolog, mitochondrial (Drosophila melanogaster (Fruit fly)).